Consider the following 669-residue polypeptide: Translation factor GUF1, mitochondrial (669 aa).

Residues 1 to 49 constitute a mitochondrion transit peptide; the sequence is MWTLVGRGWGCARALAPRATGAALLVAPGPRSAPTLGAAPESWATDRLY. Positions 66 to 247 constitute a tr-type G domain; it reads ENIRNFSIVA…AIIERIPPPK (182 aa). Residues 75–82, 140–144, and 194–197 each bind GTP; these read AHVDHGKS, DTPGH, and NKID.

Belongs to the TRAFAC class translation factor GTPase superfamily. Classic translation factor GTPase family. LepA subfamily.

Its subcellular location is the mitochondrion inner membrane. The enzyme catalyses GTP + H2O = GDP + phosphate + H(+). In terms of biological role, promotes mitochondrial protein synthesis. May act as a fidelity factor of the translation reaction, by catalyzing a one-codon backward translocation of tRNAs on improperly translocated ribosomes. Binds to mitochondrial ribosomes in a GTP-dependent manner. The sequence is that of Translation factor GUF1, mitochondrial from Homo sapiens (Human).